The following is a 57-amino-acid chain: Exactin (57 aa).

4 cysteine pairs are disulfide-bonded: cysteine 3–cysteine 19, cysteine 12–cysteine 37, cysteine 41–cysteine 49, and cysteine 50–cysteine 55.

Belongs to the three-finger toxin family. Short-chain subfamily. Orphan group XX sub-subfamily. In terms of tissue distribution, expressed by the venom gland.

The protein localises to the secreted. Functionally, anticoagulant protein that prevents the activation of factor X (F10). It acts by potently inhibiting the extrinsic tenase complex (ETC) (IC(50)=116.49 nM), a complex composed by active factor VII (F7a), tissue factor (TF) and F10. In addition, it shows weaker activities on other complexes. It weakly inhibits F10 activation by inhibiting the intrinsic tenase complex (IC(50)=4.05 uM), a complex composed by active factor IX (IXa, F9a), its cofactor factor VIII (VIIIa, F8a), and their substrate F10. It also weakly prevents prothrombin activation by inhibiting the prothrombinase complex (IC(50)=17.66 uM). It shows high kinetic constant towards F7a/TF/F10/phospholipids complex (Ki=30.62 nM) and lower kinetic constant towards F7a/TF/phospholipids complex (Ki=153.75 nM). The protein is Exactin of Hemachatus haemachatus (Rinkhals).